Here is a 260-residue protein sequence, read N- to C-terminus: Type III pantothenate kinase (260 aa).

6–13 (DCGNTNTV) provides a ligand contact to ATP. Position 107 to 110 (107 to 110 (GPDR)) interacts with substrate. Aspartate 109 functions as the Proton acceptor in the catalytic mechanism. Aspartate 129 contacts K(+). Threonine 132 provides a ligand contact to ATP. Substrate is bound at residue threonine 184.

The protein belongs to the type III pantothenate kinase family. Homodimer. NH4(+) serves as cofactor. Requires K(+) as cofactor.

The protein resides in the cytoplasm. The enzyme catalyses (R)-pantothenate + ATP = (R)-4'-phosphopantothenate + ADP + H(+). The protein operates within cofactor biosynthesis; coenzyme A biosynthesis; CoA from (R)-pantothenate: step 1/5. Functionally, catalyzes the phosphorylation of pantothenate (Pan), the first step in CoA biosynthesis. This is Type III pantothenate kinase from Ruegeria sp. (strain TM1040) (Silicibacter sp.).